A 97-amino-acid polypeptide reads, in one-letter code: Putative defensin-like protein 240 (97 aa).

The first 23 residues, 1–23 (MRYTTSFIVFCFYIFLFTNLVQG), serve as a signal peptide directing secretion. Cystine bridges form between cysteine 29-cysteine 88, cysteine 39-cysteine 69, cysteine 47-cysteine 85, and cysteine 67-cysteine 87.

Belongs to the DEFL family.

The protein resides in the secreted. The sequence is that of Putative defensin-like protein 240 (SCRL18) from Arabidopsis thaliana (Mouse-ear cress).